A 292-amino-acid chain; its full sequence is Large ribosomal subunit protein uL18 (292 aa).

The protein belongs to the universal ribosomal protein uL18 family. In terms of assembly, component of the large ribosomal subunit (LSU).

The protein resides in the cytoplasm. It is found in the nucleus. Its function is as follows. Component of the ribosome, a large ribonucleoprotein complex responsible for the synthesis of proteins in the cell. The small ribosomal subunit (SSU) binds messenger RNAs (mRNAs) and translates the encoded message by selecting cognate aminoacyl-transfer RNA (tRNA) molecules. The large subunit (LSU) contains the ribosomal catalytic site termed the peptidyl transferase center (PTC), which catalyzes the formation of peptide bonds, thereby polymerizing the amino acids delivered by tRNAs into a polypeptide chain. The nascent polypeptides leave the ribosome through a tunnel in the LSU and interact with protein factors that function in enzymatic processing, targeting, and the membrane insertion of nascent chains at the exit of the ribosomal tunnel. In Dictyostelium discoideum (Social amoeba), this protein is Large ribosomal subunit protein uL18 (rpl5).